Consider the following 126-residue polypeptide: Small ribosomal subunit protein uS11 (126 aa).

This sequence belongs to the universal ribosomal protein uS11 family. In terms of assembly, part of the 30S ribosomal subunit.

Its function is as follows. Located on the platform of the 30S subunit. This Methanosarcina barkeri (strain Fusaro / DSM 804) protein is Small ribosomal subunit protein uS11.